Here is a 514-residue protein sequence, read N- to C-terminus: Tryptophan decarboxylase 1 (514 aa).

Phenylalanine 104 provides a ligand contact to serotonin. Residues threonine 175 and serine 176 each contribute to the pyridoxal 5'-phosphate site. Histidine 214 serves as a coordination point for serotonin. Threonine 273 lines the pyridoxal 5'-phosphate pocket. Lysine 330 carries the N6-(pyridoxal phosphate)lysine modification. Residue tyrosine 359 is the Proton donor of the active site. Residues valine 380 and glycine 381 each coordinate pyridoxal 5'-phosphate.

This sequence belongs to the group II decarboxylase family. In terms of assembly, forms homodimers. The cofactor is pyridoxal 5'-phosphate.

It catalyses the reaction L-tryptophan + H(+) = tryptamine + CO2. It carries out the reaction 5-hydroxy-L-tryptophan + H(+) = serotonin + CO2. Its function is as follows. Involved in serotonin biosynthesis. Catalyzes the decarboxylation of L-tryptophan to produce tryptamine, which is converted to serotonin by tryptamine 5-hydroxylase. May play a major role in serotonin biosynthesis during senescence. Accumulation of serotonin attenuates leaf senescence. Catalyzes the decarboxylation of 5-hydroxy-L-tryptophan to produce serotonin. This is Tryptophan decarboxylase 1 from Oryza sativa subsp. japonica (Rice).